Here is a 394-residue protein sequence, read N- to C-terminus: MNNSNRIRLTWISYLSYALTGALVIVTGIVMGNIAEYFNLPIASMSNTFTFLNAGILISIFLNAWLMEIIPLKRQLVFGFILMLIAIAGLMVGHNLMIFSISMFIFGVVSGITMSIGTFLVTHMYEGRQRGSRLLFTDSFFSMAGMIFPIAAAMLLARHIEWYWVYACIGLLYVGIFVLTLCSEFPVLGHKATDQSKPVVKEKWGVGVLFLAIAALCYILGQLGFIQWVPEYATKTFNMNISQAGQLVSNFWISYMIGMWIFSFILRFFDLQRIVTVLAAMATLAMYLFVSTDNPAYLSYYILALGFVSSAIYTTLITLGSLQTKVSSPKLVNFILTCGTVGTMLTFVVTGPIVANNGVHAALETANGLYLAVFILCLALGFFTKHRSHGHVTH.

A run of 12 helical transmembrane segments spans residues 11-31 (WISYLSYALTGALVIVTGIVM), 51-71 (FLNAGILISIFLNAWLMEIIP), 76-96 (LVFGFILMLIAIAGLMVGHNL), 101-121 (ISMFIFGVVSGITMSIGTFLV), 134-154 (LLFTDSFFSMAGMIFPIAAAM), 162-182 (WYWVYACIGLLYVGIFVLTLC), 206-226 (VGVLFLAIAALCYILGQLGFI), 246-266 (QLVSNFWISYMIGMWIFSFIL), 274-294 (IVTVLAAMATLAMYLFVSTDN), 302-322 (ILALGFVSSAIYTTLITLGSL), 334-354 (FILTCGTVGTMLTFVVTGPIV), and 363-383 (LETANGLYLAVFILCLALGFF).

Belongs to the major facilitator superfamily. TsgA family.

The protein localises to the cell inner membrane. The chain is Protein TsgA homolog from Yersinia pestis bv. Antiqua (strain Antiqua).